Consider the following 618-residue polypeptide: Citrolysin protein 1 (618 aa).

Functionally, bacterial hemolysins are exotoxins that attack blood cell membranes and cause cell rupture by mechanisms not clearly defined. This chain is Citrolysin protein 1, found in Citrobacter freundii.